The chain runs to 307 residues: Murein tetrapeptide carboxypeptidase (307 aa).

Ser-115 acts as the Nucleophile in catalysis. Residues Glu-217 and His-285 each act as charge relay system in the active site.

The protein belongs to the peptidase S66 family. In terms of assembly, homodimer.

Its subcellular location is the cytoplasm. It catalyses the reaction N-acetyl-D-glucosaminyl-N-acetylmuramoyl-L-alanyl-meso-2,6-diaminoheptanedioyl-D-alanine + H2O = N-acetyl-D-glucosaminyl-N-acetylmuramoyl-L-alanyl-meso-2,6-diaminoheptanedioate + D-alanine. It functions in the pathway cell wall biogenesis; peptidoglycan recycling. In terms of biological role, releases the terminal D-alanine residue from the cytoplasmic disaccharide-tetrapeptide GlcNAc-MurNAc-L-Ala-gamma-D-Glu-meso-Dap-D-Ala, which is a murein turnover product. Probably also act on free tetrapetide. May be involved in murein recycling. In Pseudomonas aeruginosa (strain ATCC 15692 / DSM 22644 / CIP 104116 / JCM 14847 / LMG 12228 / 1C / PRS 101 / PAO1), this protein is Murein tetrapeptide carboxypeptidase.